The chain runs to 100 residues: Small ribosomal subunit protein bS20 (100 aa).

Belongs to the bacterial ribosomal protein bS20 family.

Functionally, binds directly to 16S ribosomal RNA. This chain is Small ribosomal subunit protein bS20, found in Synechococcus sp. (strain JA-3-3Ab) (Cyanobacteria bacterium Yellowstone A-Prime).